Here is a 394-residue protein sequence, read N- to C-terminus: Homoserine O-succinyltransferase (394 aa).

The region spanning 54-368 (NAVLICHALS…SSPAGHDAFL (315 aa)) is the AB hydrolase-1 domain. The active-site Nucleophile is Ser160. Position 236 (Arg236) interacts with substrate. Active-site residues include Asp331 and His364. Asp365 provides a ligand contact to substrate.

This sequence belongs to the AB hydrolase superfamily. MetX family. Homodimer.

It is found in the cytoplasm. The enzyme catalyses L-homoserine + succinyl-CoA = O-succinyl-L-homoserine + CoA. It participates in amino-acid biosynthesis; L-methionine biosynthesis via de novo pathway; O-succinyl-L-homoserine from L-homoserine: step 1/1. In terms of biological role, transfers a succinyl group from succinyl-CoA to L-homoserine, forming succinyl-L-homoserine. The polypeptide is Homoserine O-succinyltransferase (Magnetococcus marinus (strain ATCC BAA-1437 / JCM 17883 / MC-1)).